The sequence spans 208 residues: Heart- and neural crest derivatives-expressed protein 2 (208 aa).

Disordered stretches follow at residues 79–106 (AGAV…TQSI) and 161–197 (EFKK…RTGW). The span at 88–103 (TVKRRPTANRKERRRT) shows a compositional bias: basic residues. Positions 90–142 (KRRPTANRKERRRTQSINSAFAELRECIPNVPADTKLSKIKTLRLATSYIAYL) constitute a bHLH domain. A compositionally biased stretch (basic and acidic residues) spans 161–178 (EFKKTDAKEERRKKEMND).

As to quaternary structure, efficient DNA binding requires dimerization with another bHLH protein.

It localises to the nucleus. Its function is as follows. Essential for myocardial and pectoral fin differentiation, patterning and morphogenesis. The protein is Heart- and neural crest derivatives-expressed protein 2 (hand2) of Danio rerio (Zebrafish).